We begin with the raw amino-acid sequence, 220 residues long: Small ribosomal subunit protein uS3 (220 aa).

Residues 38–106 form the KH type-2 domain; sequence IREFVKKSLN…EVFLNIVEVR (69 aa).

It belongs to the universal ribosomal protein uS3 family. As to quaternary structure, part of the 30S ribosomal subunit. Forms a tight complex with proteins S10 and S14.

Its function is as follows. Binds the lower part of the 30S subunit head. Binds mRNA in the 70S ribosome, positioning it for translation. This chain is Small ribosomal subunit protein uS3, found in Myxococcus xanthus (strain DK1622).